The sequence spans 480 residues: Sialyltransferase-like protein 5 (480 aa).

At 1–17 (MARAPPPLSSLPPPPRR) the chain is on the cytoplasmic side. The chain crosses the membrane as a signal-anchor for type II membrane protein span at residues 18 to 38 (PTVVLLLGLALAFCLAVLSIQ). At 39 to 480 (SSFFTAPRLA…VCVRHERSSS (442 aa)) the chain is on the lumenal side. Residues Asn98, Asn130, Asn165, and Asn321 are each glycosylated (N-linked (GlcNAc...) asparagine).

Belongs to the glycosyltransferase 29 family.

The protein localises to the golgi apparatus membrane. May possess sialyltransferase-like activity in vitro. The protein is Sialyltransferase-like protein 5 of Oryza sativa subsp. japonica (Rice).